Reading from the N-terminus, the 416-residue chain is Homogentisate 1,2-dioxygenase (416 aa).

Histidine 275 acts as the Proton acceptor in catalysis. Residues histidine 318 and glutamate 324 each coordinate Fe cation. Homogentisate is bound by residues tyrosine 333 and histidine 354. Fe cation is bound at residue histidine 354.

It belongs to the homogentisate dioxygenase family. Hexamer; dimer of trimers. Fe cation is required as a cofactor.

The catalysed reaction is homogentisate + O2 = 4-maleylacetoacetate + H(+). It functions in the pathway amino-acid degradation; L-phenylalanine degradation; acetoacetate and fumarate from L-phenylalanine: step 4/6. In terms of biological role, involved in the catabolism of homogentisate (2,5-dihydroxyphenylacetate or 2,5-OH-PhAc), a central intermediate in the degradation of phenylalanine and tyrosine. Catalyzes the oxidative ring cleavage of the aromatic ring of homogentisate to yield maleylacetoacetate. The protein is Homogentisate 1,2-dioxygenase of Legionella pneumophila (strain Lens).